The following is a 280-amino-acid chain: Phosphatidylglycerol--prolipoprotein diacylglyceryl transferase (280 aa).

A run of 4 helical transmembrane segments spans residues 12–32 (FGPF…LIGL), 52–72 (LLPL…VAFE), 86–106 (IWEG…TLIL), and 115–133 (FWDV…QSIG). Arginine 134 lines the a 1,2-diacyl-sn-glycero-3-phospho-(1'-sn-glycerol) pocket. Helical transmembrane passes span 173–193 (PTFL…ILLF), 203–223 (LPAG…RVWI), and 246–266 (IAQL…WWLY).

It belongs to the Lgt family.

The protein localises to the cell inner membrane. The catalysed reaction is L-cysteinyl-[prolipoprotein] + a 1,2-diacyl-sn-glycero-3-phospho-(1'-sn-glycerol) = an S-1,2-diacyl-sn-glyceryl-L-cysteinyl-[prolipoprotein] + sn-glycerol 1-phosphate + H(+). It functions in the pathway protein modification; lipoprotein biosynthesis (diacylglyceryl transfer). Functionally, catalyzes the transfer of the diacylglyceryl group from phosphatidylglycerol to the sulfhydryl group of the N-terminal cysteine of a prolipoprotein, the first step in the formation of mature lipoproteins. The sequence is that of Phosphatidylglycerol--prolipoprotein diacylglyceryl transferase from Synechococcus sp. (strain CC9902).